Consider the following 296-residue polypeptide: Probable porphobilinogen deaminase (296 aa).

At Cys241 the chain carries S-(dipyrrolylmethanemethyl)cysteine.

Belongs to the HMBS family. Dipyrromethane serves as cofactor.

It carries out the reaction 4 porphobilinogen + H2O = hydroxymethylbilane + 4 NH4(+). It functions in the pathway porphyrin-containing compound metabolism; protoporphyrin-IX biosynthesis; coproporphyrinogen-III from 5-aminolevulinate: step 2/4. Functionally, tetrapolymerization of the monopyrrole PBG into the hydroxymethylbilane pre-uroporphyrinogen in several discrete steps. This Pyrobaculum calidifontis (strain DSM 21063 / JCM 11548 / VA1) protein is Probable porphobilinogen deaminase.